Here is a 303-residue protein sequence, read N- to C-terminus: Glutathione transport system permease protein GsiD (303 aa).

7 consecutive transmembrane segments (helical) span residues 37-57 (QHVA…AIFA), 105-125 (LAAG…LGLL), 144-164 (LFAF…GSGI), 165-185 (ANVI…LVRG), 208-228 (TILF…FFTM), 230-250 (IGTS…AQPP), and 266-286 (VIAP…VLAF). Residues 101–290 (AQISLAAGVF…LTVLAFNLLG (190 aa)) enclose the ABC transmembrane type-1 domain.

Belongs to the binding-protein-dependent transport system permease family. In terms of assembly, the complex is composed of two ATP-binding proteins (GsiA), two transmembrane proteins (GsiC and GsiD) and a solute-binding protein (GsiB).

The protein localises to the cell inner membrane. In terms of biological role, part of the ABC transporter complex GsiABCD involved in glutathione import. Probably responsible for the translocation of the substrate across the membrane. This chain is Glutathione transport system permease protein GsiD, found in Salmonella paratyphi A (strain ATCC 9150 / SARB42).